The chain runs to 137 residues: Large-conductance mechanosensitive channel (137 aa).

The next 2 membrane-spanning stretches (helical) occupy residues 14 to 34 and 81 to 101; these read VLDLAVGVIIGAAFTAIINSL and GSFLNAVINFLLVAFVIFLIV.

It belongs to the MscL family. As to quaternary structure, homopentamer.

The protein localises to the cell membrane. Functionally, channel that opens in response to stretch forces in the membrane lipid bilayer. May participate in the regulation of osmotic pressure changes within the cell. This is Large-conductance mechanosensitive channel from Chloroflexus aggregans (strain MD-66 / DSM 9485).